Consider the following 356-residue polypeptide: MKLSTSLEMPFRESTDPICSVCNFSSLIAPHFGGLVCSACASFFRRTVALNIHYLCKKDNQCKGMRKNCRACRFESCVKIAGMKRSLVKERKNLNNIPLYILNRRNETGNQGVVRAFVSSNQNRLENRLSLSPLTELPINDEMDVSKILKTTPSSLLKYYVEQVSHGKQFYMNTLNIRTKEELFEIVSYQSKVAAETCRTCPGVDLLDNRDILILRKYFQFSNIWIESTWKYWFSNDFSNDTEKFDIKLMEFIGQVKSTLLISLSRLKFNIFEFTAFKAICIWKLVYHETSRAMKIVAQEHYEGVTKALISYYQTYTLLDSMEIAIRVGEITLLVSSVFQMYHDMAKLYLHMGLPF.

Positions aspartate 16–glutamate 90 form a DNA-binding region, nuclear receptor. NR C4-type zinc fingers lie at residues cysteine 19–cysteine 40 and cysteine 56–cysteine 72. Positions aspartate 144–phenylalanine 356 constitute an NR LBD domain.

The protein belongs to the nuclear hormone receptor family.

The protein localises to the nucleus. Orphan nuclear receptor. The chain is Nuclear hormone receptor family member nhr-169 (nhr-169) from Caenorhabditis elegans.